Here is a 256-residue protein sequence, read N- to C-terminus: Ribonuclease HII (256 aa).

An RNase H type-2 domain is found at 72–256; that stretch reads ALICGIDEVG…TFEPIKSLVN (185 aa). 3 residues coordinate a divalent metal cation: D78, E79, and D170.

This sequence belongs to the RNase HII family. The cofactor is Mn(2+). It depends on Mg(2+) as a cofactor.

Its subcellular location is the cytoplasm. The catalysed reaction is Endonucleolytic cleavage to 5'-phosphomonoester.. In terms of biological role, endonuclease that specifically degrades the RNA of RNA-DNA hybrids. The polypeptide is Ribonuclease HII (Staphylococcus saprophyticus subsp. saprophyticus (strain ATCC 15305 / DSM 20229 / NCIMB 8711 / NCTC 7292 / S-41)).